We begin with the raw amino-acid sequence, 865 residues long: cGMP-specific 3',5'-cyclic phosphodiesterase (865 aa).

The residue at position 92 (S92) is a Phosphoserine. GAF domains are found at residues 154 to 304 (DVTA…GIVL) and 336 to 493 (SLEV…GLGI). The 325-residue stretch at 526 to 850 (ETRELQSLAA…QKWQALAEQQ (325 aa)) folds into the PDEase domain. H603 (proton donor) is an active-site residue. 4 residues coordinate Zn(2+): H607, H643, D644, and D754. D644 contributes to the Mg(2+) binding site. Q807 is a 3',5'-cyclic GMP binding site.

Belongs to the cyclic nucleotide phosphodiesterase family. The cofactor is Zn(2+). It depends on Mg(2+) as a cofactor. In terms of processing, phosphorylation is regulated by binding of cGMP to the two allosteric sites. Phosphorylation by PRKG1 leads to its activation.

The enzyme catalyses 3',5'-cyclic GMP + H2O = GMP + H(+). The protein operates within purine metabolism; 3',5'-cyclic GMP degradation; GMP from 3',5'-cyclic GMP: step 1/1. Most potently inhibited by zaprinast and dipyridamole. Plays a role in signal transduction by regulating the intracellular concentration of cyclic nucleotides. This phosphodiesterase catalyzes the specific hydrolysis of cGMP to 5'-GMP. Specifically regulates nitric-oxide-generated cGMP. This Bos taurus (Bovine) protein is cGMP-specific 3',5'-cyclic phosphodiesterase (PDE5A).